A 393-amino-acid chain; its full sequence is Phosphopentomutase (393 aa).

Positions 13, 286, 291, 327, 328, and 339 each coordinate Mn(2+).

It belongs to the phosphopentomutase family. Mn(2+) serves as cofactor.

It is found in the cytoplasm. The catalysed reaction is 2-deoxy-alpha-D-ribose 1-phosphate = 2-deoxy-D-ribose 5-phosphate. The enzyme catalyses alpha-D-ribose 1-phosphate = D-ribose 5-phosphate. It participates in carbohydrate degradation; 2-deoxy-D-ribose 1-phosphate degradation; D-glyceraldehyde 3-phosphate and acetaldehyde from 2-deoxy-alpha-D-ribose 1-phosphate: step 1/2. Its function is as follows. Isomerase that catalyzes the conversion of deoxy-ribose 1-phosphate (dRib-1-P) and ribose 1-phosphate (Rib-1-P) to deoxy-ribose 5-phosphate (dRib-5-P) and ribose 5-phosphate (Rib-5-P), respectively. The chain is Phosphopentomutase from Symbiobacterium thermophilum (strain DSM 24528 / JCM 14929 / IAM 14863 / T).